Here is a 790-residue protein sequence, read N- to C-terminus: Kinesin-like protein KIF9 (790 aa).

The region spanning 6–340 (KVHAFVRVKP…LRFASRMKLV (335 aa)) is the Kinesin motor domain. ATP-binding positions include 12-14 (RVK) and 93-100 (GQTGAGKT). Residues 342–380 (TEPAINEKYDAERMVKNLEKELALLKQELAIHDSLTNRT) are a coiled coil. The segment at 477–578 (QNFGLGVAPF…IRPDTPPSKP (102 aa)) is disordered. Residues 525–534 (VSTSKTQLVP) show a composition bias toward polar residues. Thr-530 carries the post-translational modification Phosphothreonine. 2 stretches are compositionally biased toward basic and acidic residues: residues 537–552 (KDGD…RETS) and 561–570 (SPKEELRPIR). Ser-546 is subject to Phosphoserine. Residues 658–690 (LLILKLKDLKKQYRSEYQDLRDLRAEIQYCQHL) are a coiled coil.

It belongs to the TRAFAC class myosin-kinesin ATPase superfamily. Kinesin family. As to quaternary structure, interacts with HYDIN.

The protein localises to the cytoplasm. Its subcellular location is the cytoskeleton. It localises to the cell projection. The protein resides in the cilium. It is found in the flagellum. The protein localises to the flagellum axoneme. Essential for normal male fertility and for progressive motility of spermatozoa. The protein is Kinesin-like protein KIF9 (KIF9) of Homo sapiens (Human).